Consider the following 304-residue polypeptide: Galactose 1-dehydrogenase (304 aa).

This sequence belongs to the Gfo/Idh/MocA family. As to quaternary structure, homodimer.

The protein resides in the cytoplasm. The enzyme catalyses D-galactose + NAD(+) = D-galactono-1,4-lactone + NADH + H(+). It participates in carbohydrate metabolism; galactose metabolism. Its function is as follows. Catalyzes the dehydrogenation of D-galactose by either NAD(+) or NADP(+). Oxidizes following sugars in decreasing order: D-fucose &gt; D-galactose &gt; L-arabinose &gt; 2-deoxy-D-galactose &gt;&gt; 4-deoxy-D-galactose &gt; 2-deoxy-2-amino-D-galactose. The protein is Galactose 1-dehydrogenase (gal) of Pseudomonas fluorescens.